The chain runs to 1320 residues: Myopalladin (1320 aa).

Residues 1–522 (MQDDSIEAST…FTCTASNKYG (522 aa)) are interaction with CARP. Disordered stretches follow at residues 19-68 (SYLA…AFLS), 84-145 (NYDP…SETQ), and 165-271 (FKSH…PPRF). Composition is skewed to basic and acidic residues over residues 23–35 (ETRHRGNNERSRA) and 87–106 (PLEKADETQARKRLSPDQMK). At Ser-101 the chain carries Phosphoserine. The segment covering 107 to 130 (HSPNLSFEPNFCQDNPRSPTSSKE) has biased composition (polar residues). Ser-131 carries the post-translational modification Phosphoserine. The span at 168–182 (HSSKRIRPRACKNHK) shows a compositional bias: basic residues. The span at 186–201 (ESQNKVMQENSSSFSD) shows a compositional bias: polar residues. A compositionally biased stretch (basic and acidic residues) spans 218 to 239 (DTRDNEVNHALEQQEAKRREAE). Residues 219 to 248 (TRDNEVNHALEQQEAKRREAEQAASEAAGG) adopt a coiled-coil conformation. Low complexity predominate over residues 240–258 (QAASEAAGGDTTPGSSPSS). Thr-251 bears the Phosphothreonine mark. Ig-like domains lie at 269–359 (PRFT…IYIE) and 435–531 (PVFT…AQLH). 2 disulfide bridges follow: Cys-290-Cys-341 and Cys-456-Cys-515. The disordered stretch occupies residues 554–655 (AAIEPQPSPP…VKEPPPVLAK (102 aa)). The span at 559–575 (QPSPPHSEPPSVEQPPK) shows a compositional bias: pro residues. The residue at position 644 (Ser-644) is a Phosphoserine. The segment at 649–677 (PPPVLAKPKLDSTQLQQLHNQVLLEQHQL) is interaction with NEB. Ser-759 carries the post-translational modification Phosphoserine. A disordered region spans residues 763–805 (LLVSHPSVQTKSPGGLSIQNEPLPPGPTEPTPPPFTFSIPSGN). Positions 768-782 (PSVQTKSPGGLSIQN) are enriched in polar residues. Residues 784–797 (PLPPGPTEPTPPPF) are compositionally biased toward pro residues. Phosphoserine is present on residues Ser-813, Ser-818, Ser-867, Ser-907, and Ser-928. The segment at 844–876 (NAMGLPRSAPSMPSQGLAKKNTKSPQPVNDDNI) is disordered. Ig-like domains follow at residues 945–1029 (PIFD…GRIS), 1073–1162 (PHFL…LELS), and 1172–1262 (PVIL…ARLD). The interval 945 to 1320 (PIFDKRLKHF…SRSVVESDEL (376 aa)) is interaction with ACTN. Cysteines 1094 and 1146 form a disulfide.

It belongs to the myotilin/palladin family. As to quaternary structure, interacts with TTN/titin, NEB, NEBL, ACTN2 and CARP. Expressed in adult skeletal muscle and fetal heart.

It is found in the cytoplasm. It localises to the nucleus. The protein resides in the myofibril. Its subcellular location is the sarcomere. The protein localises to the z line. Functionally, component of the sarcomere that tethers together nebulin (skeletal muscle) and nebulette (cardiac muscle) to alpha-actinin, at the Z lines. The chain is Myopalladin (MYPN) from Homo sapiens (Human).